The sequence spans 68 residues: Protein transport protein Sec61 subunit gamma (68 aa).

Residues 1–32 (MDQVMQFVEPSRQFVKDSIRLVKRCTKPDRKE) lie on the Cytoplasmic side of the membrane. Residues 33-61 (FQKIAMATAIGFAIMGFIGFFVKLIHIPI) traverse the membrane as a helical segment. Residues 62-68 (NNIIVGS) are Extracellular-facing.

The protein belongs to the SecE/SEC61-gamma family. As to quaternary structure, the SEC61 channel-forming translocon complex consists of channel-forming core components SEC61A1, SEC61B and SEC61G and different auxiliary components such as SEC62 and SEC63. The SEC61 channel associates with the multi-pass translocon (MPT) complex.

It is found in the endoplasmic reticulum membrane. In terms of biological role, component of SEC61 channel-forming translocon complex that mediates transport of signal peptide-containing precursor polypeptides across the endoplasmic reticulum (ER). Forms a ribosome receptor and a gated pore in the ER membrane, both functions required for cotranslational translocation of nascent polypeptides. The SEC61 channel is also involved in ER membrane insertion of transmembrane proteins: it mediates membrane insertion of the first few transmembrane segments of proteins, while insertion of subsequent transmembrane regions of multi-pass membrane proteins is mediated by the multi-pass translocon (MPT) complex. This Xenopus laevis (African clawed frog) protein is Protein transport protein Sec61 subunit gamma (sec61g).